A 102-amino-acid chain; its full sequence is Protein translation factor SUI1 homolog (102 aa).

Belongs to the SUI1 family.

This is Protein translation factor SUI1 homolog from Methanococcus maripaludis (strain C5 / ATCC BAA-1333).